The chain runs to 145 residues: Mediator of RNA polymerase II transcription subunit 21 (145 aa).

The stretch at 79–112 (EESTAALQAASLRQLEEENQEAAARLEEVVYRGD) forms a coiled coil.

The protein belongs to the Mediator complex subunit 21 family. In terms of assembly, component of the Mediator complex.

It localises to the nucleus. Functionally, component of the Mediator complex, a coactivator involved in the regulated transcription of nearly all RNA polymerase II-dependent genes. Mediator functions as a bridge to convey information from gene-specific regulatory proteins to the basal RNA polymerase II transcription machinery. Mediator is recruited to promoters by direct interactions with regulatory proteins and serves as a scaffold for the assembly of a functional preinitiation complex with RNA polymerase II and the general transcription factors. This is Mediator of RNA polymerase II transcription subunit 21 (med21) from Danio rerio (Zebrafish).